A 581-amino-acid chain; its full sequence is Probable bifunctional SAT/APS kinase 2 (581 aa).

The tract at residues 1–200 (MSGFVVWFTG…AAGGARGLIA (200 aa)) is adenylsulfate kinase. Residue 10–17 (GLSGAGKS) coordinates ATP. Serine 84 (phosphoserine intermediate) is an active-site residue. The interval 201-581 (PHGGELVNRW…ILIESMRSSS (381 aa)) is sulfate adenylyltransferase.

It in the N-terminal section; belongs to the APS kinase family. In the C-terminal section; belongs to the sulfate adenylyltransferase family.

It carries out the reaction sulfate + ATP + H(+) = adenosine 5'-phosphosulfate + diphosphate. The catalysed reaction is adenosine 5'-phosphosulfate + ATP = 3'-phosphoadenylyl sulfate + ADP + H(+). It functions in the pathway sulfur metabolism; hydrogen sulfide biosynthesis; sulfite from sulfate: step 1/3. Its pathway is sulfur metabolism; hydrogen sulfide biosynthesis; sulfite from sulfate: step 2/3. This is Probable bifunctional SAT/APS kinase 2 (sat2/cysC2) from Sorangium cellulosum (strain So ce56) (Polyangium cellulosum (strain So ce56)).